Here is a 639-residue protein sequence, read N- to C-terminus: Extracellular metalloproteinase mep (639 aa).

Positions 1–16 are cleaved as a signal peptide; that stretch reads MHMLSFIGALALPVFV. Positions 17–245 are excised as a propeptide; sequence CAQSCEPASL…IHGVVDYISE (229 aa). Residues Asn287, Asn320, Asn336, and Asn368 are each glycosylated (N-linked (GlcNAc...) asparagine). Residue His429 coordinates Zn(2+). The active site involves Glu430. His433 is a binding site for Zn(2+). Residue Asn509 is glycosylated (N-linked (GlcNAc...) asparagine).

Belongs to the peptidase M36 family. Requires Zn(2+) as cofactor.

The protein resides in the secreted. Secreted metalloproteinase that allows assimilation of proteinaceous substrates. The protein is Extracellular metalloproteinase mep (mep) of Aspergillus flavus (strain ATCC 200026 / FGSC A1120 / IAM 13836 / NRRL 3357 / JCM 12722 / SRRC 167).